Consider the following 450-residue polypeptide: MLDKLGQNLSEALNKIKNATFVDKKLVKEVIKDIQKALIQSDVNVKLVFNMSKEIERKAIEEAPPKGLSKKEHIVKIVYDELVKLLGETIQKLELDASKKSVILLIGIQGSGKTTSAAKLARYIQKKGLRPGLIAADVYRPAAYQQLKQLSEKINVPLFGDETRTKTPVDITKEGMEKLKKVDVIIIDTAGRHKEEEGLLAEMKEMKDLTNPNEIILVIDGTLGQQAKNQAKAFKDSVSEIGSILVTKLDGSAKGGGALSAVAEINAPIKFIGTGEGVDNLEQFDPKKFISRILGFGDLDSLLEKTEDIMDESAEESIDSILKGKFTLIELYAQLETISKMGPMKQILSMIPGMGGNMPKEAAQLTEDKLKRYKIMMDSMTMEEKENPELIKTSRLQRIARGAGVKPEEIKDLLKYYSTTKNAFGNLKRGKMPKMGGQMGQIMRQLMYKD.

GTP contacts are provided by residues 107-114 (GIQGSGKT), 188-192 (DTAGR), and 247-250 (TKLD).

It belongs to the GTP-binding SRP family. SRP54 subfamily. In terms of assembly, part of the signal recognition particle protein translocation system, which is composed of SRP and FtsY. Archaeal SRP consists of a 7S RNA molecule of 300 nucleotides and two protein subunits: SRP54 and SRP19.

The protein resides in the cytoplasm. The enzyme catalyses GTP + H2O = GDP + phosphate + H(+). In terms of biological role, involved in targeting and insertion of nascent membrane proteins into the cytoplasmic membrane. Binds to the hydrophobic signal sequence of the ribosome-nascent chain (RNC) as it emerges from the ribosomes. The SRP-RNC complex is then targeted to the cytoplasmic membrane where it interacts with the SRP receptor FtsY. This chain is Signal recognition particle 54 kDa protein, found in Methanococcus maripaludis (strain C6 / ATCC BAA-1332).